Here is a 212-residue protein sequence, read N- to C-terminus: Large ribosomal subunit protein uL3 (212 aa).

Residues 128–146 (RHGASRGPMKHGSKYHRRT) show a composition bias toward basic residues. A disordered region spans residues 128-164 (RHGASRGPMKHGSKYHRRTGSLGAKGPARVFKGRNLP).

Belongs to the universal ribosomal protein uL3 family. In terms of assembly, part of the 50S ribosomal subunit. Forms a cluster with proteins L14 and L19.

Its function is as follows. One of the primary rRNA binding proteins, it binds directly near the 3'-end of the 23S rRNA, where it nucleates assembly of the 50S subunit. The polypeptide is Large ribosomal subunit protein uL3 (Desulfitobacterium hafniense (strain Y51)).